The sequence spans 163 residues: Putative protein CASTOR3P (163 aa).

The protein belongs to the GATS family.

The polypeptide is Putative protein CASTOR3P (Homo sapiens (Human)).